The sequence spans 306 residues: Methionyl-tRNA formyltransferase (306 aa).

Residue 108-111 participates in (6S)-5,6,7,8-tetrahydrofolate binding; sequence SLLP.

The protein belongs to the Fmt family.

The catalysed reaction is L-methionyl-tRNA(fMet) + (6R)-10-formyltetrahydrofolate = N-formyl-L-methionyl-tRNA(fMet) + (6S)-5,6,7,8-tetrahydrofolate + H(+). Attaches a formyl group to the free amino group of methionyl-tRNA(fMet). The formyl group appears to play a dual role in the initiator identity of N-formylmethionyl-tRNA by promoting its recognition by IF2 and preventing the misappropriation of this tRNA by the elongation apparatus. This is Methionyl-tRNA formyltransferase from Arthrobacter sp. (strain FB24).